The sequence spans 319 residues: Myoblast determination protein 1 (319 aa).

M1 participates in a covalent cross-link: Peptide (Met-Gly) (interchain with G-Cter in ubiquitin). K104 carries the N6-methyllysine; by EHMT2 modification. A bHLH domain is found at D109–L160. 2 disordered regions span residues A174 to R222 and P267 to L319. A compositionally biased stretch (polar residues) spans S197–S207. The span at P267–P276 shows a compositional bias: low complexity.

Efficient DNA binding requires dimerization with another bHLH protein. Seems to form active heterodimers with ITF-2. Interacts with SUV39H1. Interacts with DDX5. Interacts with CHD2. Interacts with TSC22D3. Interacts with SETD3. Interacts with P-TEFB complex; promotes the transcriptional activity of MYOD1 through its CDK9-mediated phosphorylation. Interacts with CSRP3. Interacts with NUPR1. Post-translationally, phosphorylated by CDK9. This phosphorylation promotes its function in muscle differentiation. In terms of processing, acetylated by a complex containing EP300 and PCAF. The acetylation is essential to activate target genes. Conversely, its deacetylation by SIRT1 inhibits its function. Ubiquitinated on the N-terminus; which is required for proteasomal degradation. Post-translationally, methylation at Lys-104 by EHMT2/G9a inhibits myogenic activity.

It localises to the nucleus. Functionally, acts as a transcriptional activator that promotes transcription of muscle-specific target genes and plays a role in muscle differentiation. Together with MYF5 and MYOG, co-occupies muscle-specific gene promoter core region during myogenesis. Induces fibroblasts to differentiate into myoblasts. Interacts with and is inhibited by the twist protein. This interaction probably involves the basic domains of both proteins. This chain is Myoblast determination protein 1 (MYOD1), found in Ovis aries (Sheep).